Consider the following 717-residue polypeptide: MIYQSPTIEVELLEDNIAHLCFNAQGSVNKFDRETIDSLNAALDSIKQNNSIKGLMLTSAKPAFIVGADITEFLGLFAEEDAVLLSWLEEANVVFNKLEDLPFPTISAINGFALGAGCETILATDFRVADTTARIGLPETKLGIIPGFGGTVRLPRVVGTDNALEWITSGKDQRPEAALNVGAIDALVAPEQLQSAALKMLKDAIAEKLDWQTRRAKKLAPLTLPKLEAMMSFATAKGMVFKVAGKHYPAPMAVVSVIEKAAQLDRAGALKVEHQAFLKLAKTEVAQSLIGIFLNDQLVKGKAKKAGKLAKKVNSAAVLGAGIMGGGIAYQSASKGTPIVMKDIAQPALDLGLGEASKLLAAQVKRGRSNPAKMAAVLNNITPALDYAPVKAADVVVEAVVEHPKVKSMVLAEVEEHVSEDAIITSNTSTISINLLAKSLKKPERFCGMHFFNPVHKMPLVEVIRGEHSSDETVASVVAYASKMGKTPIVVNDCPGFFVNRVLFPYFAGFSGLLADGADFAAIDKVMEKQFGWPMGPAYLLDVVGLDTGHHAQAVMAEGFPERMGKTGKDAIDVMFEAERFGQKNNKGFYQYSVDRRGKPKKDLDPTSYELLQGEFGERKAFESDEIIARTMIPMIIETVRCLEEGIIASPAEADMGLVYGLGFPPFRGGVFRYLDTMGVANFVALADKYAHLGGLYQVTDAMRELAANNGSYYQQA.

The segment at 1–189 (MIYQSPTIEV…NVGAIDALVA (189 aa)) is enoyl-CoA hydratase/isomerase. Substrate is bound at residue Asp296. Residues 311 to 717 (KKVNSAAVLG…ANNGSYYQQA (407 aa)) form a 3-hydroxyacyl-CoA dehydrogenase region. NAD(+) contacts are provided by residues Met324, Asp343, 400-402 (VVE), Lys407, and Ser429. Residue His450 is the For 3-hydroxyacyl-CoA dehydrogenase activity of the active site. Asn453 contributes to the NAD(+) binding site. The substrate site is built by Asn500 and Tyr660.

In the N-terminal section; belongs to the enoyl-CoA hydratase/isomerase family. It in the C-terminal section; belongs to the 3-hydroxyacyl-CoA dehydrogenase family. In terms of assembly, heterotetramer of two alpha chains (FadB) and two beta chains (FadA).

It carries out the reaction a (3S)-3-hydroxyacyl-CoA + NAD(+) = a 3-oxoacyl-CoA + NADH + H(+). It catalyses the reaction a (3S)-3-hydroxyacyl-CoA = a (2E)-enoyl-CoA + H2O. The catalysed reaction is a 4-saturated-(3S)-3-hydroxyacyl-CoA = a (3E)-enoyl-CoA + H2O. The enzyme catalyses (3S)-3-hydroxybutanoyl-CoA = (3R)-3-hydroxybutanoyl-CoA. It carries out the reaction a (3Z)-enoyl-CoA = a 4-saturated (2E)-enoyl-CoA. It catalyses the reaction a (3E)-enoyl-CoA = a 4-saturated (2E)-enoyl-CoA. It participates in lipid metabolism; fatty acid beta-oxidation. Functionally, involved in the aerobic and anaerobic degradation of long-chain fatty acids via beta-oxidation cycle. Catalyzes the formation of 3-oxoacyl-CoA from enoyl-CoA via L-3-hydroxyacyl-CoA. It can also use D-3-hydroxyacyl-CoA and cis-3-enoyl-CoA as substrate. This chain is Fatty acid oxidation complex subunit alpha, found in Shewanella piezotolerans (strain WP3 / JCM 13877).